A 687-amino-acid polypeptide reads, in one-letter code: Polyphosphate kinase (687 aa).

ATP is bound at residue N45. Residues R375 and R405 each coordinate Mg(2+). H435 (phosphohistidine intermediate) is an active-site residue. Residues Y472, R568, and H596 each contribute to the ATP site.

This sequence belongs to the polyphosphate kinase 1 (PPK1) family. It depends on Mg(2+) as a cofactor. Post-translationally, an intermediate of this reaction is the autophosphorylated ppk in which a phosphate is covalently linked to a histidine residue through a N-P bond.

The enzyme catalyses [phosphate](n) + ATP = [phosphate](n+1) + ADP. In terms of biological role, catalyzes the reversible transfer of the terminal phosphate of ATP to form a long-chain polyphosphate (polyP). The sequence is that of Polyphosphate kinase from Burkholderia vietnamiensis (strain G4 / LMG 22486) (Burkholderia cepacia (strain R1808)).